A 283-amino-acid chain; its full sequence is Thymidylate synthase (283 aa).

DUMP is bound at residue arginine 21. Histidine 51 is a binding site for (6R)-5,10-methylene-5,6,7,8-tetrahydrofolate. 123–124 contributes to the dUMP binding site; it reads RR. The Nucleophile role is filled by cysteine 156. DUMP is bound by residues 185–188, asparagine 196, and 226–228; these read RSAD and HIY. (6R)-5,10-methylene-5,6,7,8-tetrahydrofolate is bound at residue aspartate 188. Alanine 282 provides a ligand contact to (6R)-5,10-methylene-5,6,7,8-tetrahydrofolate.

It belongs to the thymidylate synthase family. Bacterial-type ThyA subfamily. Homodimer.

The protein localises to the cytoplasm. It carries out the reaction dUMP + (6R)-5,10-methylene-5,6,7,8-tetrahydrofolate = 7,8-dihydrofolate + dTMP. The protein operates within pyrimidine metabolism; dTTP biosynthesis. Its function is as follows. Catalyzes the reductive methylation of 2'-deoxyuridine-5'-monophosphate (dUMP) to 2'-deoxythymidine-5'-monophosphate (dTMP) while utilizing 5,10-methylenetetrahydrofolate (mTHF) as the methyl donor and reductant in the reaction, yielding dihydrofolate (DHF) as a by-product. This enzymatic reaction provides an intracellular de novo source of dTMP, an essential precursor for DNA biosynthesis. The chain is Thymidylate synthase from Flavobacterium johnsoniae (strain ATCC 17061 / DSM 2064 / JCM 8514 / BCRC 14874 / CCUG 350202 / NBRC 14942 / NCIMB 11054 / UW101) (Cytophaga johnsonae).